A 158-amino-acid chain; its full sequence is Transcriptional regulator MraZ (158 aa).

SpoVT-AbrB domains lie at 5–50 (IYET…GGVY) and 91–134 (AVEC…SQSE).

This sequence belongs to the MraZ family. As to quaternary structure, forms oligomers.

It localises to the cytoplasm. Its subcellular location is the nucleoid. This chain is Transcriptional regulator MraZ, found in Geobacter metallireducens (strain ATCC 53774 / DSM 7210 / GS-15).